The chain runs to 1272 residues: uncharacterized protein (1272 aa).

Coiled-coil stretches lie at residues 185-212 (IEFL…EAVN), 246-274 (KNSA…YLDA), and 607-640 (ALGK…NTVI). The tract at residues 1179–1231 (ELPETSQQPVVPTPPATRPSSPIPPESDILTEEEQLEEQPPRQQQATRKTTTT) is disordered. Pro residues predominate over residues 1189–1203 (VPTPPATRPSSPIPP). Positions 1219-1231 (PRQQQATRKTTTT) are enriched in low complexity.

This is an uncharacterized protein from Magallana gigas (Pacific oyster).